The sequence spans 431 residues: REST corepressor 1 (431 aa).

Over residues 1 to 10 (MIEKGAEISG) the composition is skewed to basic and acidic residues. The segment at 1–53 (MIEKGAEISGKRRGRNNAANSKSLGTNVNGSNSWEEGSSSSSSDDEPGGGGMR) is disordered. Residues 17 to 28 (NAANSKSLGTNV) are compositionally biased toward polar residues. Positions 29 to 42 (NGSNSWEEGSSSSS) are enriched in low complexity. The region spanning 50-135 (GGMRVGLQYQ…KSLADLLNFT (86 aa)) is the ELM2 domain. In terms of domain architecture, SANT 1 spans 136 to 187 (PFPDEWTVEDRVLFEQAFSFHGKTFHRIQQMLPDKSIASLVKFYYSWKKTRS). The segment at 190 to 262 (SVMDRHARKQ…NRAKRKPPNG (73 aa)) is disordered. The span at 224-242 (EQPKEAKKEVPKNDTVPHI) shows a compositional bias: basic and acidic residues. Residues 267-314 (QEDVEAVSANANAATTVLRQLDMELVSIKRQIQNIKQTNSAFKEKLQG) are a coiled coil. One can recognise an SANT 2 domain in the interval 327 to 378 (KFNARWTTEEQLLAVQAIRMYGRDFQAISDVIGNKSVVQVKNFFVNYRRRFN).

Belongs to the CoREST family. In terms of assembly, component of a BHC histone deacetylase complex that contains KDM1A. Expressed in territories in which neurogenesis takes place.

It localises to the nucleus. Functionally, essential component of the BHC complex, a corepressor complex that represses transcription of neuron-specific genes in non-neuronal cells. The BHC complex is recruited at RE1/NRSE sites by REST and acts by deacetylating and demethylating specific sites on histones, thereby acting as a chromatin modifier. In the BHC complex, it serves as a molecular beacon for the recruitment of molecular machinery that imposes silencing across a chromosomal interval. Plays a central role in demethylation of Lys-4 of histone H3 by promoting demethylase activity of KDM1A on core histones and nucleosomal substrates. The chain is REST corepressor 1 (rcor1) from Xenopus laevis (African clawed frog).